The primary structure comprises 340 residues: Putative 2-hydroxyacid dehydrogenase C1773.17c (340 aa).

NAD(+) is bound by residues 169 to 170 (AI), 249 to 251 (TAR), and Asp-275. The active site involves Arg-251. Glu-280 is an active-site residue. The active-site Proton donor is His-298. Residue 298–301 (HCGV) participates in NAD(+) binding.

The protein belongs to the D-isomer specific 2-hydroxyacid dehydrogenase family.

This is Putative 2-hydroxyacid dehydrogenase C1773.17c from Schizosaccharomyces pombe (strain 972 / ATCC 24843) (Fission yeast).